The primary structure comprises 204 residues: Casparian strip membrane protein 2 (204 aa).

At 1-41 the chain is on the cytoplasmic side; sequence MKNESTFIDVPADSSSAMKGKAPLIGVAKDHTASGSGGYNR. A helical membrane pass occupies residues 42–62; that stretch reads GLSIFDFLLRLAAIVAASVAA. The Extracellular portion of the chain corresponds to 63 to 92; that stretch reads GTMFTSDETLPFFTQFLQFEAGYDDLPTFQ. The chain crosses the membrane as a helical span at residues 93 to 113; the sequence is FFVIAMSLVSGYIVLSLPISV. At 114-125 the chain is on the cytoplasmic side; it reads VTIVRPLAAAPR. The helical transmembrane segment at 126 to 146 threads the bilayer; sequence LLLLVLDTAVMGLTMAAASSA. The Extracellular portion of the chain corresponds to 147–178; sequence AAISYVAHNGNQNTNWLPICQQFFDFCQKTSG. Residues 179-199 form a helical membrane-spanning segment; sequence AVVSSFVAVVFFMILVVLSGV. The Cytoplasmic portion of the chain corresponds to 200–204; that stretch reads ALERH.

Belongs to the Casparian strip membrane proteins (CASP) family. In terms of assembly, homodimer and heterodimers.

Its subcellular location is the cell membrane. Regulates membrane-cell wall junctions and localized cell wall deposition. Required for establishment of the Casparian strip membrane domain (CSD) and the subsequent formation of Casparian strips, a cell wall modification of the root endodermis that determines an apoplastic barrier between the intraorganismal apoplasm and the extraorganismal apoplasm and prevents lateral diffusion. This Raphanus sativus (Radish) protein is Casparian strip membrane protein 2.